A 242-amino-acid polypeptide reads, in one-letter code: Phosphoribosylaminoimidazole-succinocarboxamide synthase (242 aa).

It belongs to the SAICAR synthetase family.

It catalyses the reaction 5-amino-1-(5-phospho-D-ribosyl)imidazole-4-carboxylate + L-aspartate + ATP = (2S)-2-[5-amino-1-(5-phospho-beta-D-ribosyl)imidazole-4-carboxamido]succinate + ADP + phosphate + 2 H(+). The protein operates within purine metabolism; IMP biosynthesis via de novo pathway; 5-amino-1-(5-phospho-D-ribosyl)imidazole-4-carboxamide from 5-amino-1-(5-phospho-D-ribosyl)imidazole-4-carboxylate: step 1/2. In Magnetococcus marinus (strain ATCC BAA-1437 / JCM 17883 / MC-1), this protein is Phosphoribosylaminoimidazole-succinocarboxamide synthase.